The primary structure comprises 256 residues: Acetyl-coenzyme A carboxylase carboxyl transferase subunit alpha (256 aa).

In terms of domain architecture, CoA carboxyltransferase C-terminal spans 1–236 (MTKITRIIKE…KEEIAAELDS (236 aa)).

This sequence belongs to the AccA family. As to quaternary structure, acetyl-CoA carboxylase is a heterohexamer composed of biotin carboxyl carrier protein (AccB), biotin carboxylase (AccC) and two subunits each of ACCase subunit alpha (AccA) and ACCase subunit beta (AccD).

The protein resides in the cytoplasm. The catalysed reaction is N(6)-carboxybiotinyl-L-lysyl-[protein] + acetyl-CoA = N(6)-biotinyl-L-lysyl-[protein] + malonyl-CoA. It participates in lipid metabolism; malonyl-CoA biosynthesis; malonyl-CoA from acetyl-CoA: step 1/1. Its function is as follows. Component of the acetyl coenzyme A carboxylase (ACC) complex. First, biotin carboxylase catalyzes the carboxylation of biotin on its carrier protein (BCCP) and then the CO(2) group is transferred by the carboxyltransferase to acetyl-CoA to form malonyl-CoA. This Streptococcus sanguinis (strain SK36) protein is Acetyl-coenzyme A carboxylase carboxyl transferase subunit alpha.